We begin with the raw amino-acid sequence, 342 residues long: Phosphoribosylformylglycinamidine cyclo-ligase (342 aa).

The protein belongs to the AIR synthase family.

It is found in the cytoplasm. It catalyses the reaction 2-formamido-N(1)-(5-O-phospho-beta-D-ribosyl)acetamidine + ATP = 5-amino-1-(5-phospho-beta-D-ribosyl)imidazole + ADP + phosphate + H(+). The protein operates within purine metabolism; IMP biosynthesis via de novo pathway; 5-amino-1-(5-phospho-D-ribosyl)imidazole from N(2)-formyl-N(1)-(5-phospho-D-ribosyl)glycinamide: step 2/2. The sequence is that of Phosphoribosylformylglycinamidine cyclo-ligase from Staphylococcus aureus (strain bovine RF122 / ET3-1).